A 392-amino-acid chain; its full sequence is Aminomethyltransferase, mitochondrial (392 aa).

The transit peptide at 1-16 directs the protein to the mitochondrion; the sequence is MLRAGCRAALARRHLS. Residues E221, R250, and Y388 each contribute to the substrate site.

Belongs to the GcvT family. The glycine cleavage system is composed of four proteins: P, T, L and H.

The protein resides in the mitochondrion. The enzyme catalyses N(6)-[(R)-S(8)-aminomethyldihydrolipoyl]-L-lysyl-[protein] + (6S)-5,6,7,8-tetrahydrofolate = N(6)-[(R)-dihydrolipoyl]-L-lysyl-[protein] + (6R)-5,10-methylene-5,6,7,8-tetrahydrofolate + NH4(+). In terms of biological role, the glycine cleavage system catalyzes the degradation of glycine. The polypeptide is Aminomethyltransferase, mitochondrial (Gallus gallus (Chicken)).